The sequence spans 331 residues: MTQSPTPAVVTVTGAAGSIGYAALFRIAAGAMLGPDTPIRLRLLEIPPAVSAAEGTAMELDDSAFPLLLDVEVHDDPKRGFDGTDVALLIGSRPRSKGMERGDLLAANGQIFTVQGRAINQVAADGVRVLVVGNPANTNALVAANNAPDVPAERFTALTRLDHNRAIAQLARHSGAAVRDISRVTIWGNHSSTQYPDIFHARVGDRSGADIAADREWLTGDFIPTVANRGSAIIEARGTSSAASAANAAIDHVHDWVLGTPEGDWTSVALPSTGAYGVPEGLVSSFPVRSVDGAWQVVEGLEIDDFSRKRIDASVADLESERDAVRGMGFI.

Residue 14-20 coordinates NAD(+); it reads GAAGSIG. Residues Arg-95 and Arg-101 each contribute to the substrate site. NAD(+) is bound by residues Asn-108, Gln-115, and 132–134; that span reads VGN. Substrate is bound by residues Asn-134 and Arg-165. Catalysis depends on His-190, which acts as the Proton acceptor.

It belongs to the LDH/MDH superfamily. MDH type 2 family.

It catalyses the reaction (S)-malate + NAD(+) = oxaloacetate + NADH + H(+). In terms of biological role, catalyzes the reversible oxidation of malate to oxaloacetate. In Rhodococcus opacus (strain B4), this protein is Malate dehydrogenase.